Consider the following 515-residue polypeptide: Maturase K (515 aa).

This sequence belongs to the intron maturase 2 family. MatK subfamily.

The protein localises to the plastid. It is found in the chloroplast. Its function is as follows. Usually encoded in the trnK tRNA gene intron. Probably assists in splicing its own and other chloroplast group II introns. The sequence is that of Maturase K from Picea sitchensis (Sitka spruce).